A 116-amino-acid polypeptide reads, in one-letter code: Putative iron-sulfur cluster insertion protein ErpA (116 aa).

Positions 44, 108, and 110 each coordinate iron-sulfur cluster.

It belongs to the HesB/IscA family. In terms of assembly, homodimer. It depends on iron-sulfur cluster as a cofactor.

Functionally, required for insertion of 4Fe-4S clusters. This is Putative iron-sulfur cluster insertion protein ErpA from Herminiimonas arsenicoxydans.